The sequence spans 335 residues: Twinfilin (335 aa).

ADF-H domains lie at 4 to 140 and 176 to 316; these read SSGI…QHKL and GISF…NELH. The tract at residues 307–335 is disordered; the sequence is SEESIINELHPPKVEEKKAFSKPSRPGRK. Positions 316-325 are enriched in basic and acidic residues; that stretch reads HPPKVEEKKA.

Belongs to the actin-binding proteins ADF family. Twinfilin subfamily. In terms of assembly, interacts with G-actin; ADP-actin form.

It is found in the cytoplasm. It localises to the cytoskeleton. The protein localises to the cell cortex. Functionally, actin-binding protein involved in motile and morphological processes. Inhibits actin polymerization, likely by sequestering G-actin. The protein is Twinfilin (twfA) of Dictyostelium discoideum (Social amoeba).